The primary structure comprises 351 residues: Small ribosomal subunit protein uS2 (351 aa).

The tract at residues 302 to 351 is disordered; sequence QNNYDPSKRGYNPKYVNHKSTFNKFNNKKPAEATSQAKTNEKIVIKAETN. Basic and acidic residues predominate over residues 340–351; it reads TNEKIVIKAETN.

This sequence belongs to the universal ribosomal protein uS2 family.

The sequence is that of Small ribosomal subunit protein uS2 from Ureaplasma urealyticum serovar 10 (strain ATCC 33699 / Western).